Reading from the N-terminus, the 188-residue chain is Protein YOP1 (188 aa).

Topologically, residues 1–35 (MAEIAGNLQRILQSLDRQFAGNKYLQEFERKTGFP) are cytoplasmic. The chain crosses the membrane as a helical span at residues 36–55 (KSYAIAGAGVAYLFIIFINV). Topologically, residues 56–57 (GG) are lumenal. A helical transmembrane segment spans residues 58-78 (VGEILSNFLGFVLPCYYSLHA). The Cytoplasmic segment spans residues 79–88 (IKTTTTADDT). Residues 89–105 (ELLTYWIVFAFFSVIEF) traverse the membrane as a helical segment. At 106-108 (WSK) the chain is on the lumenal side. The helical transmembrane segment at 109–127 (AILYWVPFYWFFKTIFLIF) threads the bilayer. Over 128–188 (IALPQLGGAS…TGAASHQSSD (61 aa)) the chain is Cytoplasmic. Residues 163–188 (ISSKMEQAAKGASARATGAASHQSSD) are disordered. The span at 170–188 (AAKGASARATGAASHQSSD) shows a compositional bias: low complexity.

It belongs to the DP1 family. Oligomer.

It is found in the endoplasmic reticulum membrane. The protein localises to the golgi apparatus membrane. Required to generate and maintain the structure of the tubular endoplasmic reticulum network and the vacuole. Induces high curvature in membranes and causes membrane tubule formation. Involved in membrane/vesicle trafficking. The sequence is that of Protein YOP1 (YOP1) from Eremothecium gossypii (strain ATCC 10895 / CBS 109.51 / FGSC 9923 / NRRL Y-1056) (Yeast).